The sequence spans 423 residues: UPF0229 protein VP0986 (423 aa).

The interval 69–112 (GGVRERVHPGNDQFITGDKIERPKGGGQGSGSGEGNASPDGEGQ) is disordered. A compositionally biased stretch (gly residues) spans 93-102 (GGGQGSGSGE).

It belongs to the UPF0229 family.

The chain is UPF0229 protein VP0986 from Vibrio parahaemolyticus serotype O3:K6 (strain RIMD 2210633).